A 396-amino-acid chain; its full sequence is MADGTAANSSRRIFLIATEESGDRLGSSLMKVLRRRLDDAVRFEGVGGRSMAREGLVSLFPIEDLSIMGFAAVVKQLPMILRRIRETADAVIAAEPDMLVIIDSPDFTHRVARRVRARRPALPIVDYVSPSVWAWRPGRARAMRRYVDHVLALLPFEPEEYRRLAGPPCTYVGHPLIEQVGMLRPDAQERQRRDAPPPALLVLPGSRRSEIDHHMAVFGETLRTLQLDAGEMDVVLLTMPHLIEKVKAAVASWPLQPRIVVGEQGKQAAFRVARAALTKSGTVTLELALAGVPMVTAYRGGAVEAWIAQRVIRTSSVILANLVIGENVIPEFLQENCTPENLAPALREILTDSPLRRRQLKAFAKLDAIMATGQHSPSERAADIVLETMHASRGPE.

Belongs to the LpxB family.

The catalysed reaction is a lipid X + a UDP-2-N,3-O-bis[(3R)-3-hydroxyacyl]-alpha-D-glucosamine = a lipid A disaccharide + UDP + H(+). Its pathway is bacterial outer membrane biogenesis; LPS lipid A biosynthesis. Its function is as follows. Condensation of UDP-2,3-diacylglucosamine and 2,3-diacylglucosamine-1-phosphate to form lipid A disaccharide, a precursor of lipid A, a phosphorylated glycolipid that anchors the lipopolysaccharide to the outer membrane of the cell. This Nitrobacter hamburgensis (strain DSM 10229 / NCIMB 13809 / X14) protein is Lipid-A-disaccharide synthase.